Consider the following 557-residue polypeptide: Mercuric reductase (557 aa).

Residues 1–65 (MILLSIEGMT…AIEALGYIAK (65 aa)) form the HMA domain. Residues cysteine 11 and cysteine 14 each contribute to the a metal cation site. 2 residues coordinate FAD: alanine 106 and alanine 126. Residues cysteine 133 and cysteine 138 are joined by a disulfide bond. 4 residues coordinate FAD: lysine 142, alanine 207, aspartate 399, and valine 407. Residues cysteine 554 and cysteine 555 each coordinate Hg(2+).

The protein belongs to the class-I pyridine nucleotide-disulfide oxidoreductase family. In terms of assembly, homodimer. FAD is required as a cofactor.

It catalyses the reaction Hg + NADP(+) + H(+) = Hg(2+) + NADPH. Functionally, resistance to Hg(2+) in bacteria appears to be governed by a specialized system which includes mercuric reductase. MerA protein is responsible for volatilizing mercury as Hg(0). The polypeptide is Mercuric reductase (merA) (Shewanella putrefaciens (Pseudomonas putrefaciens)).